A 140-amino-acid chain; its full sequence is Phosphatidylinositol N-acetylglucosaminyltransferase subunit GPI19 (140 aa).

Over 1-12 (MYTKEYYWFSQY) the chain is Cytoplasmic. A helical transmembrane segment spans residues 13–33 (MIITSTLVLTIIWSILPSSLG). The Lumenal portion of the chain corresponds to 34–52 (EAAPKQFINTLLDIFPQRR). The helical transmembrane segment at 53-73 (WIITLESIMLMGMLCTYIGLL) threads the bilayer. Residues 74-140 (MYNEDTLTPP…YLYDNDHTST (67 aa)) lie on the Cytoplasmic side of the membrane.

The protein belongs to the GPI19 family. Component of the phosphatidylinositol N-acetylglucosaminyltransferase (GPI-GlcNAc transferase) complex composed of at least GPI1, GPI2, GPI3, GPI15, GPI19 and ERI1. Interacts with GPI2.

It is found in the endoplasmic reticulum membrane. The enzyme catalyses a 1,2-diacyl-sn-glycero-3-phospho-(1D-myo-inositol) + UDP-N-acetyl-alpha-D-glucosamine = a 6-(N-acetyl-alpha-D-glucosaminyl)-1-(1,2-diacyl-sn-glycero-3-phospho)-1D-myo-inositol + UDP + H(+). It participates in glycolipid biosynthesis; glycosylphosphatidylinositol-anchor biosynthesis. Part of the complex catalyzing the transfer of N-acetylglucosamine from UDP-N-acetylglucosamine to phosphatidylinositol, the first step of GPI biosynthesis. Involved in cell wall biosynthesis. This chain is Phosphatidylinositol N-acetylglucosaminyltransferase subunit GPI19 (GPI19), found in Saccharomyces cerevisiae (strain ATCC 204508 / S288c) (Baker's yeast).